Reading from the N-terminus, the 490-residue chain is MVSSITRIQNYVIDGAATSNGLETVLESNFAPSLISLPATPLFGTDGIRGKVGELLSAPLALQIGFWAGVVLRNHADQLGPVILGQDSRNSSDMLAMALSAGLTAAGLEVWYLGLCPTPCVAYLTSMSEAIGGVMISASHNPPEDNGIKIFGANGGKLSQALQAEIEKGLRGNLPITSNVSNCGRHYSRWELVKNYGEALKRPWQNKVNLQGMKVVLDLAWGAAVGLAPSVFAEMGAEVISLHNAADGDRINVNCGSTHLEMLQAAVQEHNADLGFAFDGDADRVLAVDPTGRPVNGDYILYLWGLYLKQQNQLPDNLIVSTVMANLGFEKAWQQQGGKLIRTAVGDQYVQAEMIKTGAMLGGEQSGHILCSHYGMTGDGLLTALHLASLVKQSGVSLAELIDQSFQTYPQLLRNVRVVDRDRRLSWQNCTPVQQAIALAEKAMGDTGRILVRASGTEPVIRVMVEAANAELANYWTNELVAQVQQHLAP.

The active-site Phosphoserine intermediate is the Ser139. Mg(2+)-binding residues include Ser139, Asp279, Asp281, and Asp283. The residue at position 139 (Ser139) is a Phosphoserine.

Belongs to the phosphohexose mutase family. The cofactor is Mg(2+). Activated by phosphorylation.

It carries out the reaction alpha-D-glucosamine 1-phosphate = D-glucosamine 6-phosphate. Catalyzes the conversion of glucosamine-6-phosphate to glucosamine-1-phosphate. The protein is Phosphoglucosamine mutase of Nostoc sp. (strain PCC 7120 / SAG 25.82 / UTEX 2576).